The following is a 527-amino-acid chain: Peptide chain release factor 3 (527 aa).

Positions 9–277 constitute a tr-type G domain; sequence AKRRTFAIIS…AVVDWAPLPL (269 aa). GTP-binding positions include 18–25, 86–90, and 140–143; these read SHPDAGKT, DTPGH, and NKLD.

It belongs to the TRAFAC class translation factor GTPase superfamily. Classic translation factor GTPase family. PrfC subfamily.

It is found in the cytoplasm. In terms of biological role, increases the formation of ribosomal termination complexes and stimulates activities of RF-1 and RF-2. It binds guanine nucleotides and has strong preference for UGA stop codons. It may interact directly with the ribosome. The stimulation of RF-1 and RF-2 is significantly reduced by GTP and GDP, but not by GMP. This chain is Peptide chain release factor 3, found in Pseudomonas fluorescens (strain ATCC BAA-477 / NRRL B-23932 / Pf-5).